The chain runs to 184 residues: UPF0149 protein Avin_47340 (184 aa).

The protein belongs to the UPF0149 family.

In Azotobacter vinelandii (strain DJ / ATCC BAA-1303), this protein is UPF0149 protein Avin_47340.